Here is a 371-residue protein sequence, read N- to C-terminus: Nuclear hormone receptor family member nhr-51 (371 aa).

Positions Asn2 to Val77 form a DNA-binding region, nuclear receptor. 2 NR C4-type zinc fingers span residues Cys5–Cys25 and Cys41–Cys60. The NR LBD domain maps to Met98–Asp337.

Belongs to the nuclear hormone receptor family.

It is found in the nucleus. Its function is as follows. Orphan nuclear receptor. The protein is Nuclear hormone receptor family member nhr-51 (nhr-51) of Caenorhabditis elegans.